Consider the following 186-residue polypeptide: ATP-dependent protease subunit HslV (186 aa).

The active site involves T14. 3 residues coordinate Na(+): A168, C171, and T174.

It belongs to the peptidase T1B family. HslV subfamily. As to quaternary structure, a double ring-shaped homohexamer of HslV is capped on each side by a ring-shaped HslU homohexamer. The assembly of the HslU/HslV complex is dependent on binding of ATP.

The protein localises to the cytoplasm. It carries out the reaction ATP-dependent cleavage of peptide bonds with broad specificity.. Its activity is regulated as follows. Allosterically activated by HslU binding. Protease subunit of a proteasome-like degradation complex believed to be a general protein degrading machinery. The protein is ATP-dependent protease subunit HslV of Bradyrhizobium diazoefficiens (strain JCM 10833 / BCRC 13528 / IAM 13628 / NBRC 14792 / USDA 110).